A 209-amino-acid polypeptide reads, in one-letter code: Outer-membrane lipoprotein LolB (209 aa).

A signal peptide spans 1–17; that stretch reads MATVFSRALGALVLGVA. Residue Cys-18 is the site of N-palmitoyl cysteine attachment. A lipid anchor (S-diacylglycerol cysteine) is attached at Cys-18.

The protein belongs to the LolB family. In terms of assembly, monomer.

The protein resides in the cell outer membrane. Functionally, plays a critical role in the incorporation of lipoproteins in the outer membrane after they are released by the LolA protein. The polypeptide is Outer-membrane lipoprotein LolB (Ralstonia nicotianae (strain ATCC BAA-1114 / GMI1000) (Ralstonia solanacearum)).